Reading from the N-terminus, the 461-residue chain is Protein eva-1 (461 aa).

The first 22 residues, 1-22, serve as a signal peptide directing secretion; it reads MNMHIVSPVLLLFWFGIIVTDG. The 106-residue stretch at 55–160 folds into the SUEL-type lectin domain; that stretch reads ACDGERITLS…KYLQMAYGCI (106 aa). A helical transmembrane segment spans residues 370–390; the sequence is VMCIVLAVSMAAIVVLSACII. Positions 397–429 are disordered; the sequence is NKDSSRSSRRSRSRRSLETSKLVSSNYGGSITP. Over residues 415 to 429 the composition is skewed to polar residues; that stretch reads TSKLVSSNYGGSITP.

Belongs to the EVA1 family. In terms of assembly, interacts with sax-3. Interacts with slt-1. Interacts (via the SUEL-type lectin domain) with madd-4. Interacts (via the transmembrane domain) with unc-40.

Its subcellular location is the cell membrane. Acts as a receptor for slt-1. Required for the guidance of the AVM pioneer axon to the ventral nerve cord. Acts as a unc-40 coreceptor to enhance the sensitivity of unc-40 to the madd-4 midline guidance cue to guide muscle arm extensions (muscle arms) and AVM mechanosensory axons towards the dorsoventral midline. This Caenorhabditis elegans protein is Protein eva-1 (eva-1).